Here is a 346-residue protein sequence, read N- to C-terminus: Phosphate acyltransferase (346 aa).

It belongs to the PlsX family. In terms of assembly, homodimer. Probably interacts with PlsY.

It localises to the cytoplasm. It carries out the reaction a fatty acyl-[ACP] + phosphate = an acyl phosphate + holo-[ACP]. Its pathway is lipid metabolism; phospholipid metabolism. In terms of biological role, catalyzes the reversible formation of acyl-phosphate (acyl-PO(4)) from acyl-[acyl-carrier-protein] (acyl-ACP). This enzyme utilizes acyl-ACP as fatty acyl donor, but not acyl-CoA. This is Phosphate acyltransferase from Brucella ovis (strain ATCC 25840 / 63/290 / NCTC 10512).